The chain runs to 286 residues: 4-diphosphocytidyl-2-C-methyl-D-erythritol kinase (286 aa).

Lys-13 is an active-site residue. ATP is bound at residue 99–109 (PMGGGLGGGSS). Asp-141 is a catalytic residue.

This sequence belongs to the GHMP kinase family. IspE subfamily.

It carries out the reaction 4-CDP-2-C-methyl-D-erythritol + ATP = 4-CDP-2-C-methyl-D-erythritol 2-phosphate + ADP + H(+). It functions in the pathway isoprenoid biosynthesis; isopentenyl diphosphate biosynthesis via DXP pathway; isopentenyl diphosphate from 1-deoxy-D-xylulose 5-phosphate: step 3/6. Its function is as follows. Catalyzes the phosphorylation of the position 2 hydroxy group of 4-diphosphocytidyl-2C-methyl-D-erythritol. The protein is 4-diphosphocytidyl-2-C-methyl-D-erythritol kinase of Herminiimonas arsenicoxydans.